Consider the following 353-residue polypeptide: Beta-agarase B (353 aa).

The signal sequence occupies residues 1–17 (MYLIYLRLVFCCALLLG). The N-palmitoyl cysteine moiety is linked to residue Cys-18. Residue Cys-18 is the site of S-diacylglycerol cysteine attachment. The tract at residues 30–58 (LPVEQEQEQETEQEGEPEESSEQDLVEEV) is disordered. Residues 32–58 (VEQEQEQETEQEGEPEESSEQDLVEEV) show a composition bias toward acidic residues. The GH16 domain maps to 58–353 (VDWKDIPVPA…WIRIYKPVEK (296 aa)). Substrate contacts are provided by residues 105–107 (YHN) and Asp-181. Catalysis depends on Glu-184, which acts as the Nucleophile. Glu-189 functions as the Proton donor in the catalytic mechanism. Substrate contacts are provided by His-215, Arg-219, Asp-224, Gln-226, and Glu-308.

Belongs to the glycosyl hydrolase 16 family. As to quaternary structure, homodimer.

The protein localises to the cell outer membrane. It catalyses the reaction Hydrolysis of (1-&gt;4)-beta-D-galactosidic linkages in agarose, giving the tetramer as the predominant product.. Functionally, cleaves the beta-1,4-linkages between beta-D-galactose and alpha-L-3,6-anhydro-galactose residues in agarose. Cleaves agarose in a random manner with retention of the anomeric-bond configuration, producing beta-anomers that give rise progressively to alpha-anomers when mutarotation takes place. Also tolerant to hybrid substrates containing C6-sulfate groups at the -4, +1, and +3 positions. This is Beta-agarase B (agaB) from Zobellia galactanivorans (strain DSM 12802 / CCUG 47099 / CIP 106680 / NCIMB 13871 / Dsij).